The sequence spans 833 residues: Leucine--tRNA ligase (833 aa).

The 'HIGH' region signature appears at 41–52; the sequence is PYPSGAGLHVGH. The 'KMSKS' region motif lies at 610–614; sequence KMSKS. Lys613 contributes to the ATP binding site.

This sequence belongs to the class-I aminoacyl-tRNA synthetase family.

The protein resides in the cytoplasm. The catalysed reaction is tRNA(Leu) + L-leucine + ATP = L-leucyl-tRNA(Leu) + AMP + diphosphate. The polypeptide is Leucine--tRNA ligase (Streptococcus suis (strain 05ZYH33)).